Here is a 305-residue protein sequence, read N- to C-terminus: Aspartate carbamoyltransferase catalytic subunit (305 aa).

Residues Arg-56 and Thr-57 each coordinate carbamoyl phosphate. Lys-85 contributes to the L-aspartate binding site. Arg-106, His-134, and Gln-137 together coordinate carbamoyl phosphate. Arg-167 and Arg-227 together coordinate L-aspartate. Residues Leu-266 and Pro-267 each coordinate carbamoyl phosphate.

Belongs to the aspartate/ornithine carbamoyltransferase superfamily. ATCase family. Heterooligomer of catalytic and regulatory chains.

It carries out the reaction carbamoyl phosphate + L-aspartate = N-carbamoyl-L-aspartate + phosphate + H(+). It participates in pyrimidine metabolism; UMP biosynthesis via de novo pathway; (S)-dihydroorotate from bicarbonate: step 2/3. Its function is as follows. Catalyzes the condensation of carbamoyl phosphate and aspartate to form carbamoyl aspartate and inorganic phosphate, the committed step in the de novo pyrimidine nucleotide biosynthesis pathway. In Thermoplasma acidophilum (strain ATCC 25905 / DSM 1728 / JCM 9062 / NBRC 15155 / AMRC-C165), this protein is Aspartate carbamoyltransferase catalytic subunit.